Consider the following 145-residue polypeptide: Large ribosomal subunit protein uL13 (145 aa).

It belongs to the universal ribosomal protein uL13 family. As to quaternary structure, part of the 50S ribosomal subunit.

Functionally, this protein is one of the early assembly proteins of the 50S ribosomal subunit, although it is not seen to bind rRNA by itself. It is important during the early stages of 50S assembly. In Bacillus thuringiensis (strain Al Hakam), this protein is Large ribosomal subunit protein uL13.